The primary structure comprises 276 residues: 3-keto-5-aminohexanoate cleavage enzyme (276 aa).

Glu14 is a (5S)-5-amino-3-oxohexanoate binding site. Zn(2+) contacts are provided by His46 and His48. Residues Ser82, Gly85, Thr106, and Asn108 each contribute to the (5S)-5-amino-3-oxohexanoate site. Glu230 contributes to the Zn(2+) binding site.

This sequence belongs to the BKACE family. Kce subfamily. Homotetramer. Requires Zn(2+) as cofactor.

It catalyses the reaction (5S)-5-amino-3-oxohexanoate + acetyl-CoA = (3S)-3-aminobutanoyl-CoA + acetoacetate. It functions in the pathway amino-acid degradation; L-lysine degradation via acetate pathway. In terms of biological role, involved in the anaerobic fermentation of lysine. Catalyzes the reversible reaction between 3-keto-5-aminohexanoate (KAH) and acetyl-CoA to form 3-aminobutyryl-CoA and acetoacetate. The reaction involves the deprotonation of KAH, the nucleophilic addition onto acetyl-CoA and the intramolecular transfer of the CoA moiety. The polypeptide is 3-keto-5-aminohexanoate cleavage enzyme (Cloacimonas acidaminovorans (strain Evry)).